The sequence spans 294 residues: tRNA pseudouridine synthase B (294 aa).

Catalysis depends on Asp39, which acts as the Nucleophile.

Belongs to the pseudouridine synthase TruB family. Type 1 subfamily.

It carries out the reaction uridine(55) in tRNA = pseudouridine(55) in tRNA. Functionally, responsible for synthesis of pseudouridine from uracil-55 in the psi GC loop of transfer RNAs. The sequence is that of tRNA pseudouridine synthase B from Streptococcus pyogenes serotype M2 (strain MGAS10270).